We begin with the raw amino-acid sequence, 179 residues long: UPF0227 protein VIBHAR_01524 (179 aa).

The protein belongs to the UPF0227 family.

In Vibrio campbellii (strain ATCC BAA-1116), this protein is UPF0227 protein VIBHAR_01524.